We begin with the raw amino-acid sequence, 157 residues long: Small ribosomal subunit protein uS7c (157 aa).

Belongs to the universal ribosomal protein uS7 family. Part of the 30S ribosomal subunit.

It is found in the plastid. The protein localises to the organellar chromatophore. Functionally, one of the primary rRNA binding proteins, it binds directly to 16S rRNA where it nucleates assembly of the head domain of the 30S subunit. In Paulinella chromatophora, this protein is Small ribosomal subunit protein uS7c (rps7).